The following is a 626-amino-acid chain: MTYSILTESIYNFKKKSSLDMQFLSPKNFQIENFTKIHDQTLPLKPFKTNRTAVAVVPPLPIFSPELYKRQNKLKKTQNATIFSMGTSAFKNQVKYNLETYHRSNQDTCLIHKPAVKEGDWVEVGDLLADSASSIGGELAIGHNIIVAYMPWEGYNYEDAILINERLVYEDIYTSIHIERYEVTTKETKLGFEQITREIPDISENEIKHLDKTGIAKIGSWVEEGDILVGKITPFNIKTLTPQQKLLYKIFDKQLSTTKDSSLRAPKGIKANVININILARQKIQINTKSKNTGKGSKPPRASKAQNTMVSQPSYIHIYLAEKRKMQVGDKMAGRHGNKGIVSRILPRQDMPFLPDGAAVDIVLNPLGVPSRMNVGQIYECLLGLAGRYLGEHYKIPPFDEMYGADASRSFVLSKLYEARKKTGLKWLLDPNHPGKIRLFDGRNSECFDQTVTVGIAYVLKLVHMVDDKMHARSTGPYSLVTQQPLRGRSKQGGQRLGEMEVWAIEGYGAAFVLSEMLTIKSDDMTGRQNLWKNLIENKEISLGSPESFKVLICELQALCLDIGLFRKNKETSLPYFKMPGEESKTNVNANLTGVQSSKKLEANSQTVKNSSMPNLVEIDNLLNLA.

The segment at 287–307 (NTKSKNTGKGSKPPRASKAQN) is disordered.

This sequence belongs to the RNA polymerase beta chain family. As to quaternary structure, in plastids the minimal PEP RNA polymerase catalytic core is composed of four subunits: alpha, beta, beta', and beta''. When a (nuclear-encoded) sigma factor is associated with the core the holoenzyme is formed, which can initiate transcription.

It is found in the plastid. It localises to the chloroplast. It catalyses the reaction RNA(n) + a ribonucleoside 5'-triphosphate = RNA(n+1) + diphosphate. DNA-dependent RNA polymerase catalyzes the transcription of DNA into RNA using the four ribonucleoside triphosphates as substrates. This is DNA-directed RNA polymerase subunit beta C-terminal section (rpoB2) from Chlamydomonas reinhardtii (Chlamydomonas smithii).